Reading from the N-terminus, the 217-residue chain is Cyclin-P2-1 (217 aa).

Belongs to the cyclin family. Cyclin U/P subfamily.

The sequence is that of Cyclin-P2-1 (CYCP2-1) from Oryza sativa subsp. japonica (Rice).